Consider the following 147-residue polypeptide: Delta-latroinsectotoxin-Lhe1a (147 aa).

ANK repeat units follow at residues 57-59 (VSI), 66-78 (NNWT…IYFK), 79-96 (KNPA…DIEA), and 98-125 (TSIM…TLDE).

It belongs to the cationic peptide 01 (latrotoxin) family. 04 (delta-latroinsectotoxin) subfamily. Homotetramer in membrane. In terms of tissue distribution, expressed by the venom gland.

It is found in the secreted. The protein localises to the target cell membrane. In terms of biological role, insecticidal presynaptic neurotoxin that induces massive neurotransmitter release at insect (but not vertebrate) neuromuscular junctions. Native toxin forms cation-permeable pores (with high permeability to calcium) in lipid membranes locust muscle membrane and artificial lipid bilayers. May bind to insect neurexin-1 homolog, insect adhesion G protein-coupled receptor L1 homolog, and insect receptor-type tyrosine-protein phosphatase S homolog, and induces neurotransmitter exocytosis both by forming tetrameric pores in membranes and signaling via G protein-coupled receptor. Oligomerization is a process independent of divalent cations. This is Delta-latroinsectotoxin-Lhe1a from Latrodectus hesperus (Western black widow spider).